Consider the following 117-residue polypeptide: Large ribosomal subunit protein bL20 (117 aa).

This sequence belongs to the bacterial ribosomal protein bL20 family.

Its function is as follows. Binds directly to 23S ribosomal RNA and is necessary for the in vitro assembly process of the 50S ribosomal subunit. It is not involved in the protein synthesizing functions of that subunit. The polypeptide is Large ribosomal subunit protein bL20 (Campylobacter jejuni subsp. jejuni serotype O:2 (strain ATCC 700819 / NCTC 11168)).